Consider the following 160-residue polypeptide: MDYTLALALSLLQLSMCTPVPMMQDSGRMKTKAKWMVQQLLVRLKDNVWPHFDMPPTFSADDLEGSASIVARLENFNSLISDNLGDVLQIKAEISSLTGYLNNWRHNNCKEQRPRTAVPGLPQEPQRRKDFIQSVTIDALMSMKEFLNLLLQNLDHLEIC.

The signal sequence occupies residues Met1–Cys17. The cysteines at positions 109 and 160 are disulfide-linked.

Belongs to the leptin family.

Its subcellular location is the secreted. Functionally, may function as part of a signaling pathway that acts to regulate the size of the body fat depot. This is Leptin (lep) from Tetraodon nigroviridis (Spotted green pufferfish).